The sequence spans 253 residues: Triosephosphate isomerase (253 aa).

Substrate is bound at residue 9–11 (NWK). His94 serves as the catalytic Electrophile. Glu163 functions as the Proton acceptor in the catalytic mechanism. Substrate contacts are provided by residues Gly169, Ser209, and 230 to 231 (GG).

Belongs to the triosephosphate isomerase family. In terms of assembly, homodimer.

The protein localises to the cytoplasm. It carries out the reaction D-glyceraldehyde 3-phosphate = dihydroxyacetone phosphate. The protein operates within carbohydrate biosynthesis; gluconeogenesis. It functions in the pathway carbohydrate degradation; glycolysis; D-glyceraldehyde 3-phosphate from glycerone phosphate: step 1/1. In terms of biological role, involved in the gluconeogenesis. Catalyzes stereospecifically the conversion of dihydroxyacetone phosphate (DHAP) to D-glyceraldehyde-3-phosphate (G3P). This is Triosephosphate isomerase from Dehalococcoides mccartyi (strain ATCC BAA-2100 / JCM 16839 / KCTC 5957 / BAV1).